The primary structure comprises 217 residues: PRA1 family protein B3 (217 aa).

Positions 1–24 are disordered; the sequence is MMANPPTLPISDHSGGGSQSQQPV. A run of 5 helical transmembrane segments spans residues 76–96, 98–118, 138–158, 162–182, and 193–213; these read LPYFKVNYVTIVSLVLALSLL, HPFSLLVLLCLFCAWIFLYLF, LGVLVILTIVVVFLTSVGSLL, LMIGFGIVCLHGAFRVPEDLF, and LLSFLSGAATSAAVAAASTPA.

The protein belongs to the PRA1 family. As to quaternary structure, interacts with PRA1B1, PRA1B2, PRA1B4, PRA1B5, PRA1B6 and PRA1E. Expressed in hypocotyls and shoot apex.

The protein resides in the endosome membrane. May be involved in both secretory and endocytic intracellular trafficking in the endosomal/prevacuolar compartments. This is PRA1 family protein B3 (PRA1B3) from Arabidopsis thaliana (Mouse-ear cress).